A 183-amino-acid chain; its full sequence is Oligoribonuclease (183 aa).

The region spanning 9-172 (LIWIDLEMTG…DDIRDSISEL (164 aa)) is the Exonuclease domain. The active site involves Tyr130.

Belongs to the oligoribonuclease family.

The protein localises to the cytoplasm. In terms of biological role, 3'-to-5' exoribonuclease specific for small oligoribonucleotides. The chain is Oligoribonuclease from Acinetobacter baylyi (strain ATCC 33305 / BD413 / ADP1).